A 354-amino-acid chain; its full sequence is Serum paraoxonase/arylesterase 2 (354 aa).

A disulfide bridge connects residues C42 and C352. Positions 53 and 54 each coordinate Ca(2+). Residue H114 is the Proton acceptor of the active site. The Ca(2+) site is built by I116, N167, D168, and N223. An N-linked (GlcNAc...) asparagine glycan is attached at N254. Ca(2+) is bound by residues D268 and N269. N-linked (GlcNAc...) asparagine glycosylation is found at N269 and N323.

The protein belongs to the paraoxonase family. In terms of assembly, homotrimer. Ca(2+) serves as cofactor. In terms of processing, the signal sequence is not cleaved. In terms of tissue distribution, widely expressed with highest expression in liver, lung, placenta, testis and heart.

The protein resides in the membrane. The catalysed reaction is a phenyl acetate + H2O = a phenol + acetate + H(+). It catalyses the reaction an N-acyl-L-homoserine lactone + H2O = an N-acyl-L-homoserine + H(+). In terms of biological role, capable of hydrolyzing lactones and a number of aromatic carboxylic acid esters. Has antioxidant activity. Is not associated with high density lipoprotein. Prevents LDL lipid peroxidation, reverses the oxidation of mildly oxidized LDL, and inhibits the ability of MM-LDL to induce monocyte chemotaxis. The sequence is that of Serum paraoxonase/arylesterase 2 (PON2) from Homo sapiens (Human).